Reading from the N-terminus, the 644-residue chain is Exoribonuclease 2 (644 aa).

In terms of domain architecture, RNB spans 189 to 516 (REDLTALNFV…NHRLLKAMIT (328 aa)). The S1 motif domain occupies 561–643 (DTRFTAEIID…ETRNVIARPV (83 aa)).

It belongs to the RNR ribonuclease family. RNase II subfamily.

It is found in the cytoplasm. It catalyses the reaction Exonucleolytic cleavage in the 3'- to 5'-direction to yield nucleoside 5'-phosphates.. Functionally, involved in mRNA degradation. Hydrolyzes single-stranded polyribonucleotides processively in the 3' to 5' direction. This is Exoribonuclease 2 from Yersinia pestis bv. Antiqua (strain Antiqua).